A 117-amino-acid polypeptide reads, in one-letter code: Chondroitin proteoglycan 7 (117 aa).

The first 19 residues, 1–19 (MQTITLLALLACIAVPIFA), serve as a signal peptide directing secretion. Residues 31-97 (VEASGEGSGE…SGENLSNGIV (67 aa)) form a disordered region. Low complexity-rich tracts occupy residues 32 to 41 (EASGEGSGES) and 48 to 57 (ESSGEGSGES). Residues Ser66, Ser70, Ser74, Ser84, and Ser88 are each glycosylated (O-linked (Xyl...) (chondroitin sulfate) serine). A compositionally biased stretch (low complexity) spans 75–95 (GASDAVLESSGEGSGENLSNG). Asn91 carries an N-linked (GlcNAc...) asparagine glycan.

The protein is Chondroitin proteoglycan 7 (cpg-7) of Caenorhabditis briggsae.